A 339-amino-acid chain; its full sequence is Lipoyl synthase (339 aa).

A disordered region spans residues 13 to 35; the sequence is RPKLDAPARPRHPEKAHRPDTAI. [4Fe-4S] cluster is bound by residues Cys-68, Cys-73, Cys-79, Cys-94, Cys-98, Cys-101, and Ser-307. In terms of domain architecture, Radical SAM core spans 80 to 296; sequence WEKRHATFMI…ETTAYAKGFL (217 aa).

It belongs to the radical SAM superfamily. Lipoyl synthase family. It depends on [4Fe-4S] cluster as a cofactor.

Its subcellular location is the cytoplasm. It catalyses the reaction [[Fe-S] cluster scaffold protein carrying a second [4Fe-4S](2+) cluster] + N(6)-octanoyl-L-lysyl-[protein] + 2 oxidized [2Fe-2S]-[ferredoxin] + 2 S-adenosyl-L-methionine + 4 H(+) = [[Fe-S] cluster scaffold protein] + N(6)-[(R)-dihydrolipoyl]-L-lysyl-[protein] + 4 Fe(3+) + 2 hydrogen sulfide + 2 5'-deoxyadenosine + 2 L-methionine + 2 reduced [2Fe-2S]-[ferredoxin]. It participates in protein modification; protein lipoylation via endogenous pathway; protein N(6)-(lipoyl)lysine from octanoyl-[acyl-carrier-protein]: step 2/2. Catalyzes the radical-mediated insertion of two sulfur atoms into the C-6 and C-8 positions of the octanoyl moiety bound to the lipoyl domains of lipoate-dependent enzymes, thereby converting the octanoylated domains into lipoylated derivatives. The polypeptide is Lipoyl synthase (Methylorubrum extorquens (strain PA1) (Methylobacterium extorquens)).